Consider the following 359-residue polypeptide: NADH-quinone oxidoreductase subunit H (359 aa).

The next 8 membrane-spanning stretches (helical) occupy residues 19-39 (IGWF…FIAL), 94-114 (FLFV…FAVL), 127-147 (VGLF…LAAG), 175-195 (IALL…IILM), 202-222 (FLHW…IYFI), 255-275 (FAVI…IISI), 301-321 (VWGA…QMWL), and 337-357 (CWKV…IWVI).

It belongs to the complex I subunit 1 family. As to quaternary structure, NDH-1 is composed of 14 different subunits. Subunits NuoA, H, J, K, L, M, N constitute the membrane sector of the complex.

It is found in the cell inner membrane. It catalyses the reaction a quinone + NADH + 5 H(+)(in) = a quinol + NAD(+) + 4 H(+)(out). NDH-1 shuttles electrons from NADH, via FMN and iron-sulfur (Fe-S) centers, to quinones in the respiratory chain. The immediate electron acceptor for the enzyme in this species is believed to be ubiquinone. Couples the redox reaction to proton translocation (for every two electrons transferred, four hydrogen ions are translocated across the cytoplasmic membrane), and thus conserves the redox energy in a proton gradient. This subunit may bind ubiquinone. The sequence is that of NADH-quinone oxidoreductase subunit H from Chlorobaculum tepidum (strain ATCC 49652 / DSM 12025 / NBRC 103806 / TLS) (Chlorobium tepidum).